Reading from the N-terminus, the 189-residue chain is GMP synthase [glutamine-hydrolyzing] subunit A (189 aa).

The Glutamine amidotransferase type-1 domain occupies 1–189 (MIVILNNGGQ…CKVCGFKFNE (189 aa)). Residue cysteine 76 is the Nucleophile of the active site. Active-site residues include histidine 163 and glutamate 165.

As to quaternary structure, heterodimer composed of a glutamine amidotransferase subunit (A) and a GMP-binding subunit (B).

The catalysed reaction is XMP + L-glutamine + ATP + H2O = GMP + L-glutamate + AMP + diphosphate + 2 H(+). It participates in purine metabolism; GMP biosynthesis; GMP from XMP (L-Gln route): step 1/1. In terms of biological role, catalyzes the synthesis of GMP from XMP. In Methanococcus vannielii (strain ATCC 35089 / DSM 1224 / JCM 13029 / OCM 148 / SB), this protein is GMP synthase [glutamine-hydrolyzing] subunit A.